The sequence spans 197 residues: Probable host range protein 2 (197 aa).

Residues 172–197 (DHDDNDNADDDEEDDDEVNDIEDDYE) are disordered. Positions 174–197 (DDNDNADDDEEDDDEVNDIEDDYE) are enriched in acidic residues.

The protein belongs to the poxviridae C7 protein family.

In Ovis aries (Sheep), this protein is Probable host range protein 2.